The following is a 250-amino-acid chain: Endonuclease NucS 2 (250 aa).

Belongs to the NucS endonuclease family.

The protein localises to the cytoplasm. Cleaves both 3' and 5' ssDNA extremities of branched DNA structures. This chain is Endonuclease NucS 2, found in Halobacterium salinarum (strain ATCC 700922 / JCM 11081 / NRC-1) (Halobacterium halobium).